Reading from the N-terminus, the 122-residue chain is Sterile alpha motif domain-containing protein 13 (122 aa).

One can recognise an SAM domain in the interval 51 to 119 (WAVMDVVNYF…KPLQTKHLKN (69 aa)).

This chain is Sterile alpha motif domain-containing protein 13 (SAMD13), found in Homo sapiens (Human).